We begin with the raw amino-acid sequence, 325 residues long: MKKISEQKRKHLENLVDDQGIIGALAIDQRGALKRMMGKYKEVTAQEISDFKVLVSRCLTPETSAILLDPEYGLAAAENRAQTSGLLLAYEKTGYDASTPGRLPDSLDVWSVKRLKEAGADACKFLLYYDVDESEAINERKKAYIERIGSECLAEEIPFFLEIVSYDANNSDSASKEYAKVKPHKVIEAMKEFSKDRYNVDVLKVEVPVNMNFVEGFGTESLYSQDEAQAFFNMQSEATQLPFIFLSAGVSATMFQETLKFAKKAGSSFNGVLCGRATWADGVLPFVQQGAEAAVAWLETTGKTNVEELNQVLRESAVSVFEKIQ.

Belongs to the aldolase LacD family.

The catalysed reaction is D-tagatofuranose 1,6-bisphosphate = D-glyceraldehyde 3-phosphate + dihydroxyacetone phosphate. The protein operates within carbohydrate metabolism; D-tagatose 6-phosphate degradation; D-glyceraldehyde 3-phosphate and glycerone phosphate from D-tagatose 6-phosphate: step 2/2. This Enterococcus faecalis (strain ATCC 700802 / V583) protein is Tagatose 1,6-diphosphate aldolase 1 (lacD1).